We begin with the raw amino-acid sequence, 322 residues long: Lipoyl synthase (322 aa).

Residues Cys-66, Cys-71, Cys-77, Cys-92, Cys-96, Cys-99, and Ser-306 each contribute to the [4Fe-4S] cluster site. The 218-residue stretch at 78-295 (FSKGTATFMI…EKEAYELGFS (218 aa)) folds into the Radical SAM core domain.

The protein belongs to the radical SAM superfamily. Lipoyl synthase family. [4Fe-4S] cluster serves as cofactor.

It is found in the cytoplasm. The enzyme catalyses [[Fe-S] cluster scaffold protein carrying a second [4Fe-4S](2+) cluster] + N(6)-octanoyl-L-lysyl-[protein] + 2 oxidized [2Fe-2S]-[ferredoxin] + 2 S-adenosyl-L-methionine + 4 H(+) = [[Fe-S] cluster scaffold protein] + N(6)-[(R)-dihydrolipoyl]-L-lysyl-[protein] + 4 Fe(3+) + 2 hydrogen sulfide + 2 5'-deoxyadenosine + 2 L-methionine + 2 reduced [2Fe-2S]-[ferredoxin]. It functions in the pathway protein modification; protein lipoylation via endogenous pathway; protein N(6)-(lipoyl)lysine from octanoyl-[acyl-carrier-protein]: step 2/2. Functionally, catalyzes the radical-mediated insertion of two sulfur atoms into the C-6 and C-8 positions of the octanoyl moiety bound to the lipoyl domains of lipoate-dependent enzymes, thereby converting the octanoylated domains into lipoylated derivatives. This is Lipoyl synthase from Neisseria meningitidis serogroup C (strain 053442).